A 446-amino-acid polypeptide reads, in one-letter code: Neuropeptide Y receptor type 5 (446 aa).

The Extracellular segment spans residues 1 to 42 (MDLELQDFYNKTLATENNTAATRNSDFPVWDDYKSSVDDLQY). 2 N-linked (GlcNAc...) asparagine glycosylation sites follow: Asn-10 and Asn-17. Residues 43–63 (FLIGLYTFVSLLGFMGNLLIL) traverse the membrane as a helical segment. Residues 64–77 (MALMRKRNQKTMVN) are Cytoplasmic-facing. The chain crosses the membrane as a helical span at residues 78–98 (FLIGNLAFSDILVVLFCSPFT). Residues 99-117 (LTSVLLDQWMFGKVMCHIM) lie on the Extracellular side of the membrane. Cys-114 and Cys-198 are oxidised to a cystine. The helical transmembrane segment at 118 to 138 (PFLQCVSVLVSTLILISIAIV) threads the bilayer. The Cytoplasmic segment spans residues 139–156 (RYHMIKHPISNNLTANHG). A helical membrane pass occupies residues 157–177 (YFLIATVWTLGFAICSPLPVF). The Extracellular segment spans residues 178–208 (HSLVELQETFDSALLSSRYLCVESWPSDSYR). A helical membrane pass occupies residues 209 to 229 (IAFTISLLLVQYILPLVCLTV). The Cytoplasmic segment spans residues 230–369 (SHTSVCRSIS…KKRSRSVFYR (140 aa)). The chain crosses the membrane as a helical span at residues 370–390 (LTILILVFAVSWMPLHLFHVV). Topologically, residues 391–407 (TDFNDNLISNRHFKLVY) are extracellular. Residues 408-428 (CICHLLGMMSCCLNPILYGFL) traverse the membrane as a helical segment. The Cytoplasmic portion of the chain corresponds to 429 to 446 (NNGIKADLISLIQCLHMS). The S-palmitoyl cysteine moiety is linked to residue Cys-442.

Belongs to the G-protein coupled receptor 1 family.

It localises to the cell membrane. Functionally, receptor for neuropeptide Y and peptide YY. The activity of this receptor is mediated by G proteins that inhibit adenylate cyclase activity. Seems to be associated with food intake. Could be involved in feeding disorders. This is Neuropeptide Y receptor type 5 (NPY5R) from Canis lupus familiaris (Dog).